The primary structure comprises 597 residues: DNA primase (597 aa).

Zn(2+) is bound by residues Cys-40, His-43, Cys-61, and Cys-64. Residues 40-64 (CPFHGEKTPSFSVSPEKQIFHCFGC) form a CHC2-type zinc finger. The Toprim domain occupies 262–342 (QEALLVEGFA…RVKVASLPNG (81 aa)). The Mg(2+) site is built by Glu-268, Asp-311, and Asp-313. A compositionally biased stretch (basic and acidic residues) spans 429–447 (LSRSQRERTKPREAPDGET). Residues 429 to 448 (LSRSQRERTKPREAPDGETA) form a disordered region.

This sequence belongs to the DnaG primase family. As to quaternary structure, monomer. Interacts with replicative helicase DnaB, as DnaB(6):DnaG(3). A stable complex DnaI(6):DnaB(6):DnaG(3) fragment can be isolated; DnaI and DnaG do not contact each other (DnaI in this complex is derived from B.subtilis). The cofactor is Zn(2+). Mg(2+) is required as a cofactor.

The enzyme catalyses ssDNA + n NTP = ssDNA/pppN(pN)n-1 hybrid + (n-1) diphosphate.. RNA polymerase that catalyzes the synthesis of short RNA molecules used as primers for DNA polymerase during DNA replication. The polypeptide is DNA primase (Geobacillus stearothermophilus (Bacillus stearothermophilus)).